A 390-amino-acid polypeptide reads, in one-letter code: MRALQLLVLVLSGLVGAQQQALMDYLERRLLAIEDRISLWHEQTSRYASELREFKQQMVAQLEGLDKSKEALRSELDTVGTRVDRVEREMDYLETQNGAQPCVDVDDKLVEQQVTFVKERNKAKYAKLTDCSDMISSIKAMKILKRVGGAKGMWTKDMGSATGKVYILNGTDDNTVFEFGTVREFTSSQGTSGATTIQLPSAWRGMGHAIYNNHMYYLKQGEEMKLIKFDLQKNIIVDSAVFPVKNQLPVYSLNPETFIDLAVDEEGLWAIYATQENERHISLAKIDPKTLDIQQMWDTPCVRENAEAAFVICGTVYVVYNSKLPSRSRIQCVFDVSDMVNNDEAPHVYFPKRYGTHSSLKYSPVEQLLYAWDDGYQILYKLQLKKKLEV.

The N-terminal stretch at Met1–Ala17 is a signal peptide. A coiled-coil region spans residues Gln18–Asp91. An Olfactomedin-like domain is found at Asp130–Lys386. A disulfide bond links Cys131 and Cys313. Asn169 carries an N-linked (GlcNAc...) asparagine glycan.

Belongs to the OLFML3 family.

It is found in the secreted. In terms of biological role, secreted scaffold protein that plays an essential role in dorsoventral patterning during early development. Stabilizes axial formation by restricting chordin (CHRD) activity on the dorsal side. Acts by facilitating the association between the tolloid proteases and their substrate chordin (CHRD), leading to enhance chordin (CHRD) degradation. The polypeptide is Olfactomedin-like protein 3A (olfml3a) (Danio rerio (Zebrafish)).